A 1857-amino-acid polypeptide reads, in one-letter code: Fatty acid synthase subunit alpha (1857 aa).

The tract at residues 96–132 (EEEPEATEPAPSATPAAPAAAPAAGAPPPPPSAGPAA) is disordered. Residues 102–119 (TEPAPSATPAAPAAAPAA) are compositionally biased toward low complexity. The Carrier domain occupies 139–214 (VTAVDILRTL…ASMQATFNGQ (76 aa)). S174 bears the O-(pantetheine 4'-phosphoryl)serine mark. Positions 577–604 (QIIPQENGHSKKGGRSAAKRNTPTRPGK) are disordered. The tract at residues 648 to 845 (KNVLMTGAGA…GAVIGWTRGT (198 aa)) is beta-ketoacyl reductase. The Ketosynthase family 3 (KS3) domain occupies 1092 to 1633 (LQEIVIQEDL…QKGAQVIGIH (542 aa)). Catalysis depends on for beta-ketoacyl synthase activity residues C1275, H1518, and H1559. 3 residues coordinate Mg(2+): D1743, V1744, and E1745. Acetyl-CoA contacts are provided by residues 1743-1745 (DVE), Y1769, S1779, 1788-1798 (EAVFKSLGVSS), 1812-1815 (VDAN), and 1842-1844 (ISH). Residues S1843 and H1844 each contribute to the Mg(2+) site.

It belongs to the thiolase-like superfamily. Fungal fatty acid synthetase subunit alpha family. [Alpha(6)beta(6)] hexamers of two multifunctional subunits (alpha and beta).

The enzyme catalyses acetyl-CoA + n malonyl-CoA + 2n NADPH + 4n H(+) = a long-chain-acyl-CoA + n CoA + n CO2 + 2n NADP(+).. It carries out the reaction a fatty acyl-[ACP] + malonyl-[ACP] + H(+) = a 3-oxoacyl-[ACP] + holo-[ACP] + CO2. The catalysed reaction is a (3R)-hydroxyacyl-[ACP] + NADP(+) = a 3-oxoacyl-[ACP] + NADPH + H(+). Its function is as follows. Fatty acid synthetase catalyzes the formation of long-chain fatty acids from acetyl-CoA, malonyl-CoA and NADPH. The alpha subunit contains domains for: acyl carrier protein, 3-oxoacyl-[acyl-carrier-protein] reductase, and 3-oxoacyl-[acyl-carrier-protein] synthase. The polypeptide is Fatty acid synthase subunit alpha (FAS2) (Penicillium patulum (Penicillium griseofulvum)).